The primary structure comprises 149 residues: Lipoprotein MlpF (149 aa).

The signal sequence occupies residues 1 to 17; the sequence is MKIINILFCLFLLLLNS. Cys-18 carries N-palmitoyl cysteine lipidation. Residue Cys-18 is the site of S-diacylglycerol cysteine attachment. A disordered region spans residues 26 to 58; that stretch reads LKNNAQQTKSRGKRDLTQKEATPEKPKSKEELL. A compositionally biased stretch (basic and acidic residues) spans 38–58; that stretch reads KRDLTQKEATPEKPKSKEELL.

The protein belongs to the Multicopy lipoprotein (Mlp) family.

The protein resides in the cell outer membrane. Functionally, an outer membrane protein that may participate in pathogenesis. Some human Lyme disease patients have antibodies against this protein. The Mlp proteins probably undergo intragenic recombination, generating new alleles. The sequence is that of Lipoprotein MlpF from Borreliella burgdorferi (strain ATCC 35210 / DSM 4680 / CIP 102532 / B31) (Borrelia burgdorferi).